Here is a 315-residue protein sequence, read N- to C-terminus: Pantothenate kinase (315 aa).

Glycine 94–serine 101 serves as a coordination point for ATP.

This sequence belongs to the prokaryotic pantothenate kinase family.

The protein localises to the cytoplasm. The catalysed reaction is (R)-pantothenate + ATP = (R)-4'-phosphopantothenate + ADP + H(+). The protein operates within cofactor biosynthesis; coenzyme A biosynthesis; CoA from (R)-pantothenate: step 1/5. This is Pantothenate kinase from Citrobacter koseri (strain ATCC BAA-895 / CDC 4225-83 / SGSC4696).